Here is a 134-residue protein sequence, read N- to C-terminus: Mini-ribonuclease 3 (134 aa).

Asp-23 is a catalytic residue.

The protein belongs to the MrnC RNase family. As to quaternary structure, homodimer. Mg(2+) is required as a cofactor.

The protein localises to the cytoplasm. Its function is as follows. Involved in correct processing of both the 5' and 3' ends of 23S rRNA precursor. Processes 30S rRNA precursor transcript even in absence of ribonuclease 3 (Rnc); Rnc processes 30S rRNA into smaller rRNA precursors. In Brevibacillus brevis (strain 47 / JCM 6285 / NBRC 100599), this protein is Mini-ribonuclease 3.